A 1545-amino-acid chain; its full sequence is Pentafunctional AROM polypeptide (1545 aa).

The 3-dehydroquinate synthase stretch occupies residues 1–383 (MSGLIEKVSI…YEPKASYVND (383 aa)). Residues 44–46 (DSN), 82–85 (EANK), 113–115 (GGV), and D118 contribute to the NAD(+) site. R129 contributes to the 7-phospho-2-dehydro-3-deoxy-D-arabino-heptonate binding site. Position 138–139 (138–139 (TS)) interacts with NAD(+). 7-phospho-2-dehydro-3-deoxy-D-arabino-heptonate is bound by residues D145 and K151. Residue K160 participates in NAD(+) binding. N161 provides a ligand contact to 7-phospho-2-dehydro-3-deoxy-D-arabino-heptonate. Residues 178 to 181 (FLET) and N189 each bind NAD(+). Zn(2+) is bound at residue E193. 7-phospho-2-dehydro-3-deoxy-D-arabino-heptonate contacts are provided by residues 193–196 (EVVK) and K249. E259 serves as the catalytic Proton acceptor; for 3-dehydroquinate synthase activity. Residues 263-267 (RNLLN) and H270 each bind 7-phospho-2-dehydro-3-deoxy-D-arabino-heptonate. A Zn(2+)-binding site is contributed by H270. H274 functions as the Proton acceptor; for 3-dehydroquinate synthase activity in the catalytic mechanism. Residues H286 and K355 each coordinate 7-phospho-2-dehydro-3-deoxy-D-arabino-heptonate. H286 provides a ligand contact to Zn(2+). Residues 396 to 840 (VKDFNSAPST…WDILHTTFNV (445 aa)) form an EPSP synthase region. Catalysis depends on C822, which acts as the For EPSP synthase activity. The shikimate kinase stretch occupies residues 859–1049 (DKSIIVIGMR…IPNGRSAFVC (191 aa)). 866 to 873 (GMRAAGKS) serves as a coordination point for ATP. The tract at residues 1050-1261 (LTYEDLAPVS…AAPGQLTLKE (212 aa)) is 3-dehydroquinase. H1166 (proton acceptor; for 3-dehydroquinate dehydratase activity) is an active-site residue. K1195 (schiff-base intermediate with substrate; for 3-dehydroquinate dehydratase activity) is an active-site residue. Positions 1274-1545 (RKKFYIVGKP…GYQFSSHIDL (272 aa)) are shikimate dehydrogenase.

In the N-terminal section; belongs to the sugar phosphate cyclases superfamily. Dehydroquinate synthase family. This sequence in the 2nd section; belongs to the EPSP synthase family. It in the 3rd section; belongs to the shikimate kinase family. The protein in the 4th section; belongs to the type-I 3-dehydroquinase family. In the C-terminal section; belongs to the shikimate dehydrogenase family. In terms of assembly, homodimer. The cofactor is Zn(2+).

Its subcellular location is the cytoplasm. The catalysed reaction is 7-phospho-2-dehydro-3-deoxy-D-arabino-heptonate = 3-dehydroquinate + phosphate. The enzyme catalyses 3-dehydroquinate = 3-dehydroshikimate + H2O. It catalyses the reaction shikimate + NADP(+) = 3-dehydroshikimate + NADPH + H(+). It carries out the reaction shikimate + ATP = 3-phosphoshikimate + ADP + H(+). The catalysed reaction is 3-phosphoshikimate + phosphoenolpyruvate = 5-O-(1-carboxyvinyl)-3-phosphoshikimate + phosphate. The protein operates within metabolic intermediate biosynthesis; chorismate biosynthesis; chorismate from D-erythrose 4-phosphate and phosphoenolpyruvate: step 2/7. Its pathway is metabolic intermediate biosynthesis; chorismate biosynthesis; chorismate from D-erythrose 4-phosphate and phosphoenolpyruvate: step 3/7. It functions in the pathway metabolic intermediate biosynthesis; chorismate biosynthesis; chorismate from D-erythrose 4-phosphate and phosphoenolpyruvate: step 4/7. It participates in metabolic intermediate biosynthesis; chorismate biosynthesis; chorismate from D-erythrose 4-phosphate and phosphoenolpyruvate: step 5/7. The protein operates within metabolic intermediate biosynthesis; chorismate biosynthesis; chorismate from D-erythrose 4-phosphate and phosphoenolpyruvate: step 6/7. In terms of biological role, the AROM polypeptide catalyzes 5 consecutive enzymatic reactions in prechorismate polyaromatic amino acid biosynthesis. The sequence is that of Pentafunctional AROM polypeptide from Komagataella phaffii (strain GS115 / ATCC 20864) (Yeast).